A 399-amino-acid chain; its full sequence is MKLEVFAPRAAHGDKMGSDLEGAGSSDVPSPLSAAGDDSLGSDGDCAANSPAAGSGAGDLEGGGGERNSSGGASTQDDPEVTDGSRTQASPVGPCAGSVGGGEGARSKPYTRRPKPPYSYIALIAMAIRDSAGGRLTLAEINEYLMGKFPFFRGSYTGWRNSVRHNLSLNDCFVKVLRDPSRPWGKDNYWMLNPNSEYTFADGVFRRRRKRLSHRTTVSASGYGGGSPPGPAGTPQPAPTAGSSPIARSPARQEEGSSPASKFSSSFAIDSILSKPFRSRRDGTPALGVQLPWSAAPCPPLRAYPALLPASSGGALLPLCAYGAAEPTLLASRGAEVQPAAPLFVAPLSTAAPAKPFRGPETAGAAHLYCPLRLPTALQAAAACGPGPHLSYRVETLLA.

Residues 1-112 (MKLEVFAPRA…EGARSKPYTR (112 aa)) form a disordered region. Over residues 32–54 (LSAAGDDSLGSDGDCAANSPAAG) the composition is skewed to low complexity. Residues 55-66 (SGAGDLEGGGGE) show a composition bias toward gly residues. A DNA-binding region (fork-head) is located at residues 114–205 (PKPPYSYIAL…SEYTFADGVF (92 aa)). Positions 211–263 (RLSHRTTVSASGYGGGSPPGPAGTPQPAPTAGSSPIARSPARQEEGSSPASKF) are disordered. Pro residues predominate over residues 228–238 (PPGPAGTPQPA).

Its subcellular location is the nucleus. Plays a role in hair follicle differentiation. The polypeptide is Forkhead box protein Q1 (Foxq1) (Rattus norvegicus (Rat)).